Here is a 338-residue protein sequence, read N- to C-terminus: Lipoate-protein ligase A (338 aa).

The region spanning 29–216 (PATQRVLFLW…AFFAHYGERV (188 aa)) is the BPL/LPL catalytic domain. Residues Arg-71, 76–79 (GAVF), and Lys-134 contribute to the ATP site. Lys-134 serves as a coordination point for (R)-lipoate.

Belongs to the LplA family. In terms of assembly, monomer.

The protein localises to the cytoplasm. The enzyme catalyses L-lysyl-[lipoyl-carrier protein] + (R)-lipoate + ATP = N(6)-[(R)-lipoyl]-L-lysyl-[lipoyl-carrier protein] + AMP + diphosphate + H(+). Its pathway is protein modification; protein lipoylation via exogenous pathway; protein N(6)-(lipoyl)lysine from lipoate: step 1/2. It participates in protein modification; protein lipoylation via exogenous pathway; protein N(6)-(lipoyl)lysine from lipoate: step 2/2. Its function is as follows. Catalyzes both the ATP-dependent activation of exogenously supplied lipoate to lipoyl-AMP and the transfer of the activated lipoyl onto the lipoyl domains of lipoate-dependent enzymes. This Escherichia coli (strain SMS-3-5 / SECEC) protein is Lipoate-protein ligase A.